The sequence spans 169 residues: Probable NADH dehydrogenase [ubiquinone] 1 alpha subcomplex subunit 5, mitochondrial (169 aa).

A mitochondrion-targeting transit peptide spans 1–11 (MFLRAIGRPLL).

Belongs to the complex I NDUFA5 subunit family. In terms of assembly, complex I is composed of at least 49 different subunits.

The protein resides in the mitochondrion inner membrane. In terms of biological role, accessory subunit of the mitochondrial membrane respiratory chain NADH dehydrogenase (Complex I), that is believed not to be involved in catalysis. Complex I functions in the transfer of electrons from NADH to the respiratory chain. The immediate electron acceptor for the enzyme is believed to be ubiquinone. The sequence is that of Probable NADH dehydrogenase [ubiquinone] 1 alpha subcomplex subunit 5, mitochondrial from Arabidopsis thaliana (Mouse-ear cress).